We begin with the raw amino-acid sequence, 708 residues long: Protein MICRORCHIDIA 5 (708 aa).

Positions 1-11 are enriched in polar residues; that stretch reads MAESGSTNPKS. Residues 1 to 47 form a disordered region; the sequence is MAESGSTNPKSPSVVPDSTLGGLKRDLRNYHDGDDSNNLSIKKSKTT. Basic and acidic residues predominate over residues 23–34; it reads LKRDLRNYHDGD. Positions 590-665 form a coiled coil; it reads SVNLEAELQK…LENRQEGVST (76 aa). A Nuclear localization signal motif is present at residues 672-679; it reads ARRDVTED.

It belongs to the MORC ATPase protein family. As to quaternary structure, homodimer and heterodimer. Component of an RNA-directed DNA methylation (RdDM) complex. Mg(2+) serves as cofactor. Requires Mn(2+) as cofactor.

The protein resides in the nucleus. Functionally, exhibits ATPase activity. Binds DNA/RNA in a non-specific manner and exhibits endonuclease activity. Probably involved in DNA repair. Involved in RNA-directed DNA methylation (RdDM) as a component of the RdDM machinery and required for gene silencing. May also be involved in the regulation of chromatin architecture to maintain gene silencing. The polypeptide is Protein MICRORCHIDIA 5 (Arabidopsis thaliana (Mouse-ear cress)).